The chain runs to 98 residues: NADH-ubiquinone oxidoreductase chain 4L (98 aa).

The next 3 helical transmembrane spans lie at 1-21 (MMSINLNLIMAFSLALAGVLI), 28-48 (STLLCLEGMMLSLFILMALLI), and 59-79 (APLVLLVFSACEAGVGLALLV).

It belongs to the complex I subunit 4L family. As to quaternary structure, core subunit of respiratory chain NADH dehydrogenase (Complex I) which is composed of 45 different subunits.

The protein resides in the mitochondrion inner membrane. The enzyme catalyses a ubiquinone + NADH + 5 H(+)(in) = a ubiquinol + NAD(+) + 4 H(+)(out). Functionally, core subunit of the mitochondrial membrane respiratory chain NADH dehydrogenase (Complex I) which catalyzes electron transfer from NADH through the respiratory chain, using ubiquinone as an electron acceptor. Part of the enzyme membrane arm which is embedded in the lipid bilayer and involved in proton translocation. This Pseudocheirus peregrinus (Common ring-tailed possum) protein is NADH-ubiquinone oxidoreductase chain 4L (MT-ND4L).